The primary structure comprises 226 residues: 3-dehydroquinate dehydratase (226 aa).

Residues 29 to 31 and R56 contribute to the 3-dehydroquinate site; that span reads EFR. The Proton donor/acceptor role is filled by H120. The Schiff-base intermediate with substrate role is filled by K146. 3-dehydroquinate is bound by residues R187, T208, and Q212.

It belongs to the type-I 3-dehydroquinase family. Homodimer.

The enzyme catalyses 3-dehydroquinate = 3-dehydroshikimate + H2O. It participates in metabolic intermediate biosynthesis; chorismate biosynthesis; chorismate from D-erythrose 4-phosphate and phosphoenolpyruvate: step 3/7. Involved in the third step of the chorismate pathway, which leads to the biosynthesis of aromatic amino acids. Catalyzes the cis-dehydration of 3-dehydroquinate (DHQ) and introduces the first double bond of the aromatic ring to yield 3-dehydroshikimate. The sequence is that of 3-dehydroquinate dehydratase from Halobacterium salinarum (strain ATCC 700922 / JCM 11081 / NRC-1) (Halobacterium halobium).